Reading from the N-terminus, the 271-residue chain is Structure-specific endonuclease subunit slx1 (271 aa).

Residues 5 to 87 (NFYCCYLLKS…QNLGISRYTK (83 aa)) enclose the GIY-YIG domain. Residues 180-231 (CNLCYECIESDELRANCPFTDCNSINHLTCLASSFLTEECQVLPIEGMCTKC) form an SLX1-type zinc finger.

This sequence belongs to the SLX1 family. In terms of assembly, forms a heterodimer with slx4. Mg(2+) serves as cofactor. Mn(2+) is required as a cofactor.

It is found in the nucleus. The protein resides in the nucleolus. Catalytic subunit of the slx1-slx4 structure-specific endonuclease that resolves DNA secondary structures generated during DNA repair and recombination. Has endonuclease activity towards branched DNA substrates, introducing single-strand cuts in duplex DNA close to junctions with ss-DNA. Has a preference for stem-loop (SL) and splayed arm Y structures. Introduces a single-strand cut in duplex DNA on the 3' side of a double-strand/single-strand junction with respect to the single-strand moving 3' to 5' away from the junction. Plays a critical role in maintaining the integrity of the ribosomal DNA (rDNA) loci, where it has a role in re-starting stalled replication forks. The complex initiates homologous recombination (HR) events, used to maintain rDNA copy number, in the rDNA repeats that are processed by a mechanism that requires rad22, but not rhp51. It is also required for suppression of methyl methanesulfonate (MMS) and UV-C irradiation hypersensitivity of the structural maintenance of chromosome (SMC) protein mutant, smc6-74, by overexpression of brc1. Has Holliday junction resolvase activity in vitro. In Schizosaccharomyces pombe (strain 972 / ATCC 24843) (Fission yeast), this protein is Structure-specific endonuclease subunit slx1.